Consider the following 176-residue polypeptide: DELTA-stichotoxin-She4a (176 aa).

The plays an important role in the hemolytic activity stretch occupies residues 2–11 (ELAGTIIDGA). An N-terminal region region spans residues 10 to 29 (GASLTFEVLDKVLGELGKVS). Phosphocholine is bound by residues serine 53, valine 86, serine 104, proline 106, tyrosine 132, tyrosine 136, and tyrosine 137. A trp-rich region, which is important for the binding to lipid membrane region spans residues 104 to 119 (SVPFDYNWYSNWWDVK). The Cell attachment site signature appears at 142-144 (RGD).

In terms of assembly, octamer or nonamer in membranes. Monomer in the soluble state.

The protein resides in the secreted. It is found in the nematocyst. It localises to the target cell membrane. In terms of biological role, pore-forming protein that forms cations-selective hydrophilic pores of around 1 nm and causes cardiac stimulation and cytolysis. Pore formation is a multi-step process that involves specific recognition of membrane sphingomyelin (but neither cholesterol nor phosphatidylcholine) using aromatic rich region and adjacent phosphocholine (POC) binding site, firm binding to the membrane (mainly driven by hydrophobic interactions) accompanied by the transfer of the N-terminal region to the lipid-water interface and finally pore formation after oligomerization of monomers. Cytolytic effects include red blood cells hemolysis, platelet aggregation and lysis, cytotoxic and cytostatic effects on fibroblasts. Lethality in mammals has been ascribed to severe vasospasm of coronary vessels, cardiac arrhythmia, and inotropic effects. In Stichodactyla helianthus (Sun anemone), this protein is DELTA-stichotoxin-She4a.